The chain runs to 697 residues: Semaphorin-2A (697 aa).

Residues 1 to 20 (MAAKLWNLLLVAASVHLVGS) form the signal peptide. Residues 21–493 (VEQLHQDLIH…SDNIVRQIEL (473 aa)) form the Sema domain. N63 and N66 each carry an N-linked (GlcNAc...) asparagine glycan. Residues C87 and C98 are joined by a disulfide bond. N-linked (GlcNAc...) asparagine glycosylation is found at N132, N198, and N283. Cystine bridges form between C260/C367 and C284/C326. N369 is a glycosylation site (N-linked (GlcNAc...) asparagine). Intrachain disulfides connect C496/C512 and C506/C521. One can recognise an Ig-like C2-type domain in the interval 526–634 (PGLLQDVTNT…LCSYNITVDA (109 aa)). N534, N629, and N679 each carry an N-linked (GlcNAc...) asparagine glycan. C618 and C654 are joined by a disulfide. Positions 673–685 (QCSTKQNNSNQKT) are enriched in polar residues. The disordered stretch occupies residues 673–697 (QCSTKQNNSNQKTHPNDIFHSNPVA).

This sequence belongs to the semaphorin family. As to expression, expressed in a gradient in the developing limb bud epithelium during Ti pioneer axon outgrowth.

Its subcellular location is the secreted. Acts as a chemorepulsive guidance molecule critical for axon fasciculation and for determining both the initial direction and subsequent pathfinding events of the Ti axon projection. This chain is Semaphorin-2A (SEMA-2A), found in Schistocerca gregaria (Desert locust).